The primary structure comprises 623 residues: Kelch repeat and BTB domain-containing protein 2 (623 aa).

Residues 31–98 (TDIVLIVEGT…AYTGNLAMND (68 aa)) form the BTB domain. Residues 133–229 (CVRLLSFADL…IRIDALSEVT (97 aa)) enclose the BACK domain. Ser300 bears the Phosphoserine mark. Kelch repeat units follow at residues 317 to 380 (DIYI…CCEG), 381 to 429 (HIYA…VVHD), 431 to 469 (IYVMTLNLMYCYFPRSDSWVEMAMRQTSRSFASAAAFGD), 470 to 529 (KIFY…RAVV), and 535 to 581 (CVFM…DFRC).

As to quaternary structure, component of the BCR(KBTBD2) E3 ubiquitin ligase complex, at least composed of CUL3, KBTBD2 and RBX1. Interacts (via the BTB domain) with CUL3.

Its pathway is protein modification; protein ubiquitination. In terms of biological role, substrate-specific adapter of a BCR (BTB-CUL3-RBX1) E3 ubiquitin ligase complex that acts as a regulator of the insulin signaling pathway, modulating insulin sensitivity by limiting PIK3R1/p85alpha abundance in adipocytes. Targets PIK3R1, the regulatory subunit of phosphatidylinositol 3-kinase (PI3K), for 'Lys-48'-linked polyubiquitination and proteasome-mediated degradation. This chain is Kelch repeat and BTB domain-containing protein 2 (KBTBD2), found in Pongo abelii (Sumatran orangutan).